The sequence spans 311 residues: Dihydroorotate dehydrogenase A (fumarate) (311 aa).

FMN contacts are provided by residues Ser19 and 43-44 (KS). Substrate-binding positions include Lys43, 67–71 (NSMGL), and Asn127. An FMN-binding site is contributed by Asn127. Residue Cys130 is the Nucleophile of the active site. Residues Lys164 and Val192 each contribute to the FMN site. A substrate-binding site is contributed by 193-194 (NS). Residues Gly221, 249–250 (GG), and 271–272 (GT) contribute to the FMN site.

The protein belongs to the dihydroorotate dehydrogenase family. Type 1 subfamily. In terms of assembly, homodimer. The cofactor is FMN.

The protein localises to the cytoplasm. It catalyses the reaction (S)-dihydroorotate + fumarate = orotate + succinate. Its pathway is pyrimidine metabolism; UMP biosynthesis via de novo pathway. Catalyzes the conversion of dihydroorotate to orotate with fumarate as the electron acceptor. In Lactococcus lactis subsp. lactis (strain IL1403) (Streptococcus lactis), this protein is Dihydroorotate dehydrogenase A (fumarate) (pyrDA).